Here is a 126-residue protein sequence, read N- to C-terminus: MLSRLIQHITSIFVFSFFFLFFFFSLKRCPRDVKREGNEIFTGNVTTITQVYLESTNVSAYLGCQCNNIETIICLQNSGNTTISAYHVHISEIGSVALQTEGALLVFSPIFCFLVKFVYRQRIALV.

A helical transmembrane segment spans residues 5-25 (LIQHITSIFVFSFFFLFFFFS).

It localises to the membrane. This is an uncharacterized protein from Saccharomyces cerevisiae (strain ATCC 204508 / S288c) (Baker's yeast).